The primary structure comprises 423 residues: Steroid hormone receptor ERR1 (423 aa).

The disordered stretch occupies residues 1–67 (MSSQVVGIEP…GAGPGEQGGG (67 aa)). Residues 1–76 (MSSQVVGIEP…GKLVLSSLPK (76 aa)) form a repressor domain region. K14 participates in a covalent cross-link: Glycyl lysine isopeptide (Lys-Gly) (interchain with G-Cter in SUMO). Residues S19 and S22 each carry the phosphoserine modification. Gly residues predominate over residues 58-67 (GAGPGEQGGG). A DNA-binding region (nuclear receptor) is located at residues 76 to 151 (KRLCLVCGDV…VGMLKEGVRL (76 aa)). 2 NR C4-type zinc fingers span residues 79 to 99 (CLVCGDVASGYHYGVASCEAC) and 115 to 134 (CPASNECEITKRRRKACQAC). 4 positions are modified to N6-acetyllysine; by PCAF/KAT2B: K129, K138, K160, and K162. A Glycyl lysine isopeptide (Lys-Gly) (interchain with G-Cter in SUMO2) cross-link involves residue K189. Positions 193 to 421 (PVNALVSHLL…KLFLEMLEAM (229 aa)) constitute an NR LBD domain. K403 participates in a covalent cross-link: Glycyl lysine isopeptide (Lys-Gly) (interchain with G-Cter in SUMO); alternate. K403 participates in a covalent cross-link: Glycyl lysine isopeptide (Lys-Gly) (interchain with G-Cter in SUMO2); alternate. Residues 403–423 (KLEGKVPMHKLFLEMLEAMMD) are AF-2 domain.

This sequence belongs to the nuclear hormone receptor family. NR3 subfamily. Binds DNA as a monomer or a homodimer. Interacts (via the AF2 domain) with coactivator PPARGC1A (via the L3 motif); the interaction greatly enhances transcriptional activity of genes involved in energy metabolism. Interacts with PIAS4; the interaction enhances sumoylation. Interacts with MAPK15; promotes re-localization of ESRRA to the cytoplasm through a XPO1-dependent mechanism then inhibits ESRRA transcriptional activity. Phosphorylation on Ser-19 enhances sumoylation on Lys-14 increasing repression of transcriptional activity. In terms of processing, sumoylated with SUMO2. Main site is Lys-14 which is enhanced by phosphorylation on Ser-19, cofactor activation, and by interaction with PIAS4. Sumoylation enhances repression of transcriptional activity, but has no effect on subcellular location nor on DNA binding. Post-translationally, reversibly acetylated. Acetylation by PCAF/KAT2 at Lys-129, Lys-138, Lys-160 and Lys-162 and PCAF/KAT2 decreases transcriptional activity probably by inhibiting DNA-binding activity; deacetylation involves SIRT1 and HDAC8 and increases DNA-binding.

The protein resides in the nucleus. It is found in the cytoplasm. Functionally, binds to an ERR-alpha response element (ERRE) containing a single consensus half-site, 5'-TNAAGGTCA-3'. Can bind to the medium-chain acyl coenzyme A dehydrogenase (MCAD) response element NRRE-1 and may act as an important regulator of MCAD promoter. Binds to the C1 region of the lactoferrin gene promoter. Requires dimerization and the coactivator, PGC-1A, for full activity. The ERRalpha/PGC1alpha complex is a regulator of energy metabolism. Induces the expression of PERM1 in the skeletal muscle. In Homo sapiens (Human), this protein is Steroid hormone receptor ERR1 (ESRRA).